A 396-amino-acid polypeptide reads, in one-letter code: Argininosuccinate synthase (396 aa).

ATP contacts are provided by residues 10–18 and A37; that span reads AYSGGLDTS. L-citrulline-binding residues include Y88 and S93. G118 is an ATP binding site. Residues T120, N124, and D125 each contribute to the L-aspartate site. Residue N124 coordinates L-citrulline. L-citrulline contacts are provided by R128, S176, S185, E261, and Y273.

The protein belongs to the argininosuccinate synthase family. Type 1 subfamily. Homotetramer.

Its subcellular location is the cytoplasm. The enzyme catalyses L-citrulline + L-aspartate + ATP = 2-(N(omega)-L-arginino)succinate + AMP + diphosphate + H(+). It functions in the pathway amino-acid biosynthesis; L-arginine biosynthesis; L-arginine from L-ornithine and carbamoyl phosphate: step 2/3. The chain is Argininosuccinate synthase from Nitratidesulfovibrio vulgaris (strain DP4) (Desulfovibrio vulgaris).